Consider the following 297-residue polypeptide: MVTIGNAHDDLIHDAVLDYYGKRLATCSSDKTIKLFEVEGTENYKLVETLIGHEGPVWQVAWAHPKFGSILASCSYDGKALIWKEQPETQQWSIIAEHTVHQASVNSVSWAPHELGAILLCTSSDGKVSVVDFNDDGTTSHIIFDAHAIGVNSASWAPLSNNNTKGKDTNSIRRFVTCGSDNLAKIWKFDSSKNAYIEEAVLEGHTDWVRDVCWSPSILIRSYIATASQDRTVLIWSQDNNGKWQKQLLTEEMFPDVCWRCSWSLSGNILAVSGGDNKVSLWKENLQGKWESAGEVE.

WD repeat units lie at residues 7–46 (AHDDLIHDAVLDYYGKRLATCSSDKTIKLFEVEGTENYKL), 52–93 (GHEG…QQWS), 100–141 (VHQA…TTSH), 146–197 (AHAI…NAYI), 204–246 (GHTD…KWQK), and 253–292 (MFPDVCWRCSWSLSGNILAVSGGDNKVSLWKENLQGKWES).

This sequence belongs to the WD repeat SEC13 family. As to quaternary structure, the COPII coat is composed of at least 5 proteins: the SEC23/24 complex, the SEC13/31 complex, and the protein SAR1. Component of the nuclear pore complex (NPC). NPC constitutes the exclusive means of nucleocytoplasmic transport. NPCs allow the passive diffusion of ions and small molecules and the active, nuclear transport receptor-mediated bidirectional transport of macromolecules such as proteins, RNAs, ribonucleoparticles (RNPs), and ribosomal subunits across the nuclear envelope. Due to its 8-fold rotational symmetry, all subunits are present with 8 copies or multiples thereof.

The protein localises to the cytoplasmic vesicle. Its subcellular location is the COPII-coated vesicle membrane. It localises to the endoplasmic reticulum membrane. It is found in the nucleus. The protein resides in the nuclear pore complex. Its function is as follows. Component of the coat protein complex II (COPII) which promotes the formation of transport vesicles from the endoplasmic reticulum (ER). The coat has two main functions, the physical deformation of the endoplasmic reticulum membrane into vesicles and the selection of cargo molecules. It also functions as a component of the nuclear pore complex (NPC). NPC components, collectively referred to as nucleoporins (NUPs), can play the role of both NPC structural components and of docking or interaction partners for transiently associated nuclear transport factors. SEC13 is required for efficient mRNA export from the nucleus to the cytoplasm and for correct nuclear pore biogenesis and distribution. The protein is Protein transport protein SEC13 (SEC13) of Debaryomyces hansenii (strain ATCC 36239 / CBS 767 / BCRC 21394 / JCM 1990 / NBRC 0083 / IGC 2968) (Yeast).